A 33-amino-acid polypeptide reads, in one-letter code: DELTA-pseudomyrmecitoxin-Pp1a subunit B (33 aa).

As to quaternary structure, heterodimer composed of subunit A and subunit B (DELTA-PSDTX-Pp1a); disulfide-linked. In terms of tissue distribution, expressed by the venom gland.

It is found in the secreted. Its function is as follows. This heterodimer has insecticidal and cytotoxic properties. Induces immediate paralysis when injected into blowflies (Lucilia cuprina), and then death within 24 hours. Also inhibits the growth of Aedes albopictus mosquito C6/36 cells. The protein is DELTA-pseudomyrmecitoxin-Pp1a subunit B of Pseudomyrmex penetrator (Ant).